Reading from the N-terminus, the 456-residue chain is Bifunctional protein GlmU (456 aa).

The segment at 1-229 (MLNNAMSVVI…LSEVEGVNNR (229 aa)) is pyrophosphorylase. Residues 11-14 (LAAG), Lys25, Gln76, 81-82 (GT), 103-105 (YGD), Gly140, Glu154, Asn169, and Asn227 contribute to the UDP-N-acetyl-alpha-D-glucosamine site. A Mg(2+)-binding site is contributed by Asp105. Asn227 lines the Mg(2+) pocket. Residues 230 to 250 (LQLSRLERVYQFEQAEKLLLA) form a linker region. Positions 251-456 (GVMLRDPARF…EGWRRPVKKK (206 aa)) are N-acetyltransferase. Residues Arg333 and Lys351 each contribute to the UDP-N-acetyl-alpha-D-glucosamine site. His363 (proton acceptor) is an active-site residue. Tyr366 and Asn377 together coordinate UDP-N-acetyl-alpha-D-glucosamine. Residues Ala380, 386–387 (NY), Ser405, Ala423, and Arg440 contribute to the acetyl-CoA site.

In the N-terminal section; belongs to the N-acetylglucosamine-1-phosphate uridyltransferase family. This sequence in the C-terminal section; belongs to the transferase hexapeptide repeat family. As to quaternary structure, homotrimer. Mg(2+) is required as a cofactor.

The protein resides in the cytoplasm. It catalyses the reaction alpha-D-glucosamine 1-phosphate + acetyl-CoA = N-acetyl-alpha-D-glucosamine 1-phosphate + CoA + H(+). It carries out the reaction N-acetyl-alpha-D-glucosamine 1-phosphate + UTP + H(+) = UDP-N-acetyl-alpha-D-glucosamine + diphosphate. Its pathway is nucleotide-sugar biosynthesis; UDP-N-acetyl-alpha-D-glucosamine biosynthesis; N-acetyl-alpha-D-glucosamine 1-phosphate from alpha-D-glucosamine 6-phosphate (route II): step 2/2. It functions in the pathway nucleotide-sugar biosynthesis; UDP-N-acetyl-alpha-D-glucosamine biosynthesis; UDP-N-acetyl-alpha-D-glucosamine from N-acetyl-alpha-D-glucosamine 1-phosphate: step 1/1. It participates in bacterial outer membrane biogenesis; LPS lipid A biosynthesis. Catalyzes the last two sequential reactions in the de novo biosynthetic pathway for UDP-N-acetylglucosamine (UDP-GlcNAc). The C-terminal domain catalyzes the transfer of acetyl group from acetyl coenzyme A to glucosamine-1-phosphate (GlcN-1-P) to produce N-acetylglucosamine-1-phosphate (GlcNAc-1-P), which is converted into UDP-GlcNAc by the transfer of uridine 5-monophosphate (from uridine 5-triphosphate), a reaction catalyzed by the N-terminal domain. The protein is Bifunctional protein GlmU of Escherichia coli O7:K1 (strain IAI39 / ExPEC).